Here is a 100-residue protein sequence, read N- to C-terminus: UPF0213 protein FN1575 (100 aa).

Residues 1–77 (MAYYLYMLRC…KYIKKKKENI (77 aa)) enclose the GIY-YIG domain.

This sequence belongs to the UPF0213 family.

This chain is UPF0213 protein FN1575, found in Fusobacterium nucleatum subsp. nucleatum (strain ATCC 25586 / DSM 15643 / BCRC 10681 / CIP 101130 / JCM 8532 / KCTC 2640 / LMG 13131 / VPI 4355).